The primary structure comprises 330 residues: D-alanine--D-alanine ligase (330 aa).

One can recognise an ATP-grasp domain in the interval 120 to 326 (KLWYDALGIP…FKTFLQKAVL (207 aa)). 150-205 (AFKQWGGLFVKAACQGSSVGCYKVTSEAELSKAINDAFGYSQQVLVEKAVKPRELE) is a binding site for ATP. Residues aspartate 280, glutamate 293, and asparagine 295 each coordinate Mg(2+).

Belongs to the D-alanine--D-alanine ligase family. It depends on Mg(2+) as a cofactor. Mn(2+) serves as cofactor.

The protein localises to the cytoplasm. It carries out the reaction 2 D-alanine + ATP = D-alanyl-D-alanine + ADP + phosphate + H(+). It functions in the pathway cell wall biogenesis; peptidoglycan biosynthesis. Cell wall formation. This is D-alanine--D-alanine ligase from Aliivibrio fischeri (strain ATCC 700601 / ES114) (Vibrio fischeri).